The chain runs to 111 residues: Large ribosomal subunit protein uL22 (111 aa).

Belongs to the universal ribosomal protein uL22 family. As to quaternary structure, part of the 50S ribosomal subunit.

This protein binds specifically to 23S rRNA; its binding is stimulated by other ribosomal proteins, e.g. L4, L17, and L20. It is important during the early stages of 50S assembly. It makes multiple contacts with different domains of the 23S rRNA in the assembled 50S subunit and ribosome. Its function is as follows. The globular domain of the protein is located near the polypeptide exit tunnel on the outside of the subunit, while an extended beta-hairpin is found that lines the wall of the exit tunnel in the center of the 70S ribosome. This is Large ribosomal subunit protein uL22 from Geobacter sulfurreducens (strain ATCC 51573 / DSM 12127 / PCA).